The following is a 560-amino-acid chain: Clathrin interactor EPSIN 1 (560 aa).

The ENTH domain occupies Leu-20–Arg-152. The disordered stretch occupies residues Asn-190–Val-288. A compositionally biased stretch (basic and acidic residues) spans Ser-193–Glu-220. The span at Gln-221 to Gly-233 shows a compositional bias: polar residues. Over residues Ser-234–Lys-251 the composition is skewed to basic and acidic residues. Polar residues predominate over residues Gly-274–Gln-287. Residues Ile-296–Leu-300 carry the Clathrin binding motif. The short motif at Asp-320–Phe-322 is the ALPHA-ADR binding element. The segment covering Ser-414–Leu-439 has biased composition (polar residues). Disordered regions lie at residues Ser-414 to Asp-453 and Leu-517 to Gln-560. Low complexity predominate over residues Gln-526–Gln-536. Positions Phe-544–Gln-554 are enriched in polar residues.

It belongs to the epsin family. In terms of assembly, interacts with clathrin, VTI11, GAMMA-ADR and VSR1. Binds to the deubiquitinating enzyme AMSH3. As to expression, mostly expressed in cotyledons and flowers, and, to a lower extent, in roots, leaves and siliques (at protein level).

It localises to the golgi apparatus. The protein localises to the prevacuolar compartment. Its subcellular location is the cytoplasm. It is found in the cytoplasmic vesicle. The protein resides in the clathrin-coated vesicle. It localises to the cytoskeleton. Functionally, may have a role in transport via clathrin-coated vesicles from the trans-Golgi network to endosomes. Stimulates clathrin assembly. Does not seem to bind to phospholipids. Plays an important role in the vacuolar trafficking of soluble cargo proteins at the trans-Golgi network. The polypeptide is Clathrin interactor EPSIN 1 (EPSIN1) (Arabidopsis thaliana (Mouse-ear cress)).